The chain runs to 382 residues: MSTWLLPENIADVLPSEARKIEELRRRLLDRFRSYGYEMVMPPLLEYLESLLTSGGNELRLRTFKLVDQVSGRTLGLRADMTPQVARIDAHLLNRQGVTRLCYAGPVLHTRPRGLHASREQLQIGAEIYGHAGLEADQEIQQLMLDALHLTGLKKIRLDLCHAGVLAALFARDAAAAERGEALYEALAGKDVPRLNELTDDLGADTRAALRALPRLYGDASVLDDARRLLPALPEITRALDDLAHLAAQVKDAEVAIDLADLRGYAYHSGAMFAAYVDGVPNAVAHGGRYDHVGQAYGRARPATGFSLDLREIARISPVEARGAAILAPWKQDDALRAAVGALRDAGEVVIQALPGHDHVLDEFACDRALVERDGAWVIEPR.

It belongs to the class-II aminoacyl-tRNA synthetase family. HisZ subfamily. As to quaternary structure, heteromultimer composed of HisG and HisZ subunits.

It is found in the cytoplasm. It functions in the pathway amino-acid biosynthesis; L-histidine biosynthesis; L-histidine from 5-phospho-alpha-D-ribose 1-diphosphate: step 1/9. In terms of biological role, required for the first step of histidine biosynthesis. May allow the feedback regulation of ATP phosphoribosyltransferase activity by histidine. This is ATP phosphoribosyltransferase regulatory subunit from Burkholderia pseudomallei (strain 1106a).